The following is a 242-amino-acid chain: Probable pectate lyase D (242 aa).

The N-terminal stretch at 1–17 (MYQKSLLFSLLASSALA) is a signal peptide. Asn216 carries an N-linked (GlcNAc...) asparagine glycan. The segment at 217–242 (DTGAEPEEISEGPSDACQYSEPLSSC) is disordered.

Belongs to the polysaccharide lyase 3 family. It depends on Ca(2+) as a cofactor.

Its subcellular location is the secreted. It carries out the reaction Eliminative cleavage of (1-&gt;4)-alpha-D-galacturonan to give oligosaccharides with 4-deoxy-alpha-D-galact-4-enuronosyl groups at their non-reducing ends.. Its function is as follows. Pectinolytic enzyme consist of four classes of enzymes: pectin lyase, polygalacturonase, pectin methylesterase and rhamnogalacturonase. Among pectinolytic enzymes, pectin lyase is the most important in depolymerization of pectin, since it cleaves internal glycosidic bonds of highly methylated pectins. Favors pectate, the anion, over pectin, the methyl ester. The chain is Probable pectate lyase D (plyD) from Aspergillus fumigatus (strain CBS 144.89 / FGSC A1163 / CEA10) (Neosartorya fumigata).